The primary structure comprises 324 residues: Glyoxylate/hydroxypyruvate reductase B (324 aa).

Catalysis depends on residues Arg237 and Glu266. Catalysis depends on His285, which acts as the Proton donor.

This sequence belongs to the D-isomer specific 2-hydroxyacid dehydrogenase family. GhrB subfamily. Homodimer.

It localises to the cytoplasm. It catalyses the reaction glycolate + NADP(+) = glyoxylate + NADPH + H(+). It carries out the reaction (R)-glycerate + NAD(+) = 3-hydroxypyruvate + NADH + H(+). The catalysed reaction is (R)-glycerate + NADP(+) = 3-hydroxypyruvate + NADPH + H(+). Functionally, catalyzes the NADPH-dependent reduction of glyoxylate and hydroxypyruvate into glycolate and glycerate, respectively. The sequence is that of Glyoxylate/hydroxypyruvate reductase B from Salmonella choleraesuis (strain SC-B67).